We begin with the raw amino-acid sequence, 1447 residues long: Calcium-dependent secretion activator (1447 aa).

Over residues 1-15 (MIDPSSSEEEGEDDA) the composition is skewed to acidic residues. Disordered regions lie at residues 1–35 (MIDP…TSAV) and 101–163 (DTGN…EEEE). Polar residues-rich tracts occupy residues 18–32 (NVSS…TKGT) and 111–126 (GIPS…QSVG). A compositionally biased stretch (low complexity) spans 127 to 144 (SSRANSLPRPLSPSPSLT). The segment covering 145–163 (SEKHETAEPHGKHEREEEE) has biased composition (basic and acidic residues). The C2 domain occupies 417–547 (SKYGLQKLKR…PLSSKSPEWH (131 aa)). The region spanning 573–683 (NMKHCGYLYA…WVMAMYRATG (111 aa)) is the PH domain. Residues 970–1157 (VDMDRVLSEQ…DMIEQCIQRT (188 aa)) form the MHD1 domain. Acidic residues predominate over residues 1386 to 1395 (REGEEEDNGD). Residues 1386-1406 (REGEEEDNGDESTSNIPRGLP) are disordered.

As to expression, restricted to the nervous system at all stages of development and highly localized at synapses (at protein level).

It localises to the cytoplasmic vesicle membrane. Its subcellular location is the synapse. In terms of biological role, calcium-binding protein involved in exocytosis of vesicles filled with neurotransmitters and neuropeptides. May specifically mediate the Ca(2+)-dependent exocytosis of large dense-core vesicles (DCVs) and other dense-core vesicles. However, it probably also participates in small clear synaptic vesicles (SVs) exocytosis and it is unclear whether its function is related to Ca(2+) triggering. The polypeptide is Calcium-dependent secretion activator (Drosophila melanogaster (Fruit fly)).